The chain runs to 201 residues: Prostamide/prostaglandin F synthase (201 aa).

Residue Y108 is modified to Phosphotyrosine.

It belongs to the peroxiredoxin-like PRXL2 family. Prostamide/prostaglandin F synthase subfamily.

The protein localises to the cytoplasm. Its subcellular location is the cytosol. It carries out the reaction prostaglandin H2 + [thioredoxin]-dithiol = prostaglandin F2alpha + [thioredoxin]-disulfide. The catalysed reaction is prostamide F2alpha + [thioredoxin]-disulfide = prostamide H2 + [thioredoxin]-dithiol. Its function is as follows. Catalyzes the reduction of prostaglandin-ethanolamide H(2) (prostamide H(2)) to prostamide F(2alpha) with NADPH as proton donor. Also able to reduce prostaglandin H(2) to prostaglandin F(2alpha). The chain is Prostamide/prostaglandin F synthase (PRXL2B) from Bos taurus (Bovine).